The primary structure comprises 535 residues: Glutamate--cysteine ligase (535 aa).

The protein belongs to the glutamate--cysteine ligase type 1 family. Type 1 subfamily.

It catalyses the reaction L-cysteine + L-glutamate + ATP = gamma-L-glutamyl-L-cysteine + ADP + phosphate + H(+). Its pathway is sulfur metabolism; glutathione biosynthesis; glutathione from L-cysteine and L-glutamate: step 1/2. The sequence is that of Glutamate--cysteine ligase from Pseudomonas syringae pv. syringae.